Reading from the N-terminus, the 512-residue chain is Mannose-1-phosphate guanylyltransferase (512 aa).

This sequence belongs to the mannose-6-phosphate isomerase type 2 family.

The catalysed reaction is alpha-D-mannose 1-phosphate + GTP + H(+) = GDP-alpha-D-mannose + diphosphate. The polypeptide is Mannose-1-phosphate guanylyltransferase (noeJ) (Sinorhizobium fredii (strain NBRC 101917 / NGR234)).